We begin with the raw amino-acid sequence, 666 residues long: DEAD-box ATP-dependent RNA helicase 30 (666 aa).

The tract at residues 53-102 (PDPNLPRRLPFPSSSSTPTAAAPPDSGEPSRARARTETYRTGDMNPYDLR) is disordered. Positions 64–76 (PSSSSTPTAAAPP) are enriched in low complexity. Over residues 80-92 (EPSRARARTETYR) the composition is skewed to basic and acidic residues. Residues 251-279 (RYFQEANFPDYCMQAIAKSGFVEPTPIQS) carry the Q motif motif. One can recognise a Helicase ATP-binding domain in the interval 282 to 457 (WPMALKGRDM…RQFLQNPYKV (176 aa)). 295–302 (AQTGSGKT) lines the ATP pocket. A DEAD box motif is present at residues 405-408 (DEAD). A Helicase C-terminal domain is found at 485-630 (RLSKLLSDLM…VVNPALESMA (146 aa)). Residues 632–666 (SASSMGGGNFRSRGRGGFGNRSGSNSIPIRGRRPY) are disordered. Gly residues predominate over residues 636–651 (MGGGNFRSRGRGGFGN).

The protein belongs to the DEAD box helicase family. DDX5/DBP2 subfamily.

It is found in the nucleus. It carries out the reaction ATP + H2O = ADP + phosphate + H(+). In terms of biological role, ATP-dependent RNA helicase involved nonsense-mediated mRNA decay and ribosome biogenesis through rRNA processing. This chain is DEAD-box ATP-dependent RNA helicase 30, found in Oryza sativa subsp. japonica (Rice).